The chain runs to 296 residues: MEQFRNIGIIGRLGSSQVLDTIRRLKKFLLERHLHVILEDTIAEVLPGHGLQTSTRKLLGEVCDLVIVVGGDGSLLGAARALARHNIPVLGINRGNLGFLTDIRPDELEEKVAAVLDGHYLVENRFLLQAEVRRHHEAIGQGDALNDVVLHPGKSTRMIEFEIYIDGQFVCSQKADGLIVATPTGSTAYALSAGGPIMHPKLDAIVIVPMYPHTLSGRPIVVDGNSELKIVVSKDLQIYPQVSCDGQNHFTCAPGDTITVSKKPQKLRLIHPLGHNYYEVCRTKLGWGSRLGGRDD.

Asp72 (proton acceptor) is an active-site residue. Residues 72-73 (DG), 146-147 (ND), Arg157, Lys174, Asp176, 187-192 (TAYALS), and Gln247 each bind NAD(+).

Belongs to the NAD kinase family. It depends on a divalent metal cation as a cofactor.

It is found in the cytoplasm. The catalysed reaction is NAD(+) + ATP = ADP + NADP(+) + H(+). Its function is as follows. Involved in the regulation of the intracellular balance of NAD and NADP, and is a key enzyme in the biosynthesis of NADP. Catalyzes specifically the phosphorylation on 2'-hydroxyl of the adenosine moiety of NAD to yield NADP. The sequence is that of NAD kinase from Pseudomonas putida (strain W619).